We begin with the raw amino-acid sequence, 360 residues long: Cyclin-D1-binding protein 1 (360 aa).

Position 2 is an N-acetylalanine (alanine 2). Interaction with TCF3 stretches follow at residues 2 to 184 (ASAT…VDFV) and 150 to 360 (ISYN…ELEL). Interaction with RPLP0 stretches follow at residues 2–190 (ASAT…AHEE) and 240–360 (LIIP…ELEL). The interval 2-208 (ASATAPAAAV…DPYSGLLNDT (207 aa)) is required for interaction with CCND1.

This sequence belongs to the CCNDBP1 family. Interacts with CCND1 and GRAP2. May also interact with COPS5, RPLP0, SIRT6, SYF2 and TCF3. In terms of processing, phosphorylated. In terms of tissue distribution, ubiquitously expressed. Expression is down-regulated in a variety of tumor types including breast, colon, prostate and rectal tumors, and is up-regulated in certain hepatic carcinomas.

The protein localises to the cytoplasm. It is found in the nucleus. Its function is as follows. May negatively regulate cell cycle progression. May act at least in part via inhibition of the cyclin-D1/CDK4 complex, thereby preventing phosphorylation of RB1 and blocking E2F-dependent transcription. This chain is Cyclin-D1-binding protein 1 (CCNDBP1), found in Homo sapiens (Human).